The following is a 184-amino-acid chain: Protein PLANT CADMIUM RESISTANCE 4 (184 aa).

Polar residues predominate over residues 1–10 (MGRPGSQPNE). A disordered region spans residues 1-21 (MGRPGSQPNEAQPPPVQVQPT). Residues 96 to 116 (GGLLYGMIFFIGVPFVYSCMF) traverse the membrane as a helical segment.

This sequence belongs to the cornifelin family.

It is found in the membrane. Functionally, may be involved in heavy metals transport. The sequence is that of Protein PLANT CADMIUM RESISTANCE 4 (PCR4) from Arabidopsis thaliana (Mouse-ear cress).